The following is a 470-amino-acid chain: Ribulose bisphosphate carboxylase large chain (470 aa).

K5 carries the N6,N6,N6-trimethyllysine modification. N114 and T164 together coordinate substrate. K166 (proton acceptor) is an active-site residue. A substrate-binding site is contributed by K168. Positions 192, 194, and 195 each coordinate Mg(2+). N6-carboxylysine is present on K192. H285 (proton acceptor) is an active-site residue. Residues R286, H318, and S370 each contribute to the substrate site.

It belongs to the RuBisCO large chain family. Type I subfamily. As to quaternary structure, heterohexadecamer of 8 large chains and 8 small chains; disulfide-linked. The disulfide link is formed within the large subunit homodimers. The cofactor is Mg(2+). The disulfide bond which can form in the large chain dimeric partners within the hexadecamer appears to be associated with oxidative stress and protein turnover.

Its subcellular location is the plastid. The protein localises to the chloroplast. It carries out the reaction 2 (2R)-3-phosphoglycerate + 2 H(+) = D-ribulose 1,5-bisphosphate + CO2 + H2O. The enzyme catalyses D-ribulose 1,5-bisphosphate + O2 = 2-phosphoglycolate + (2R)-3-phosphoglycerate + 2 H(+). RuBisCO catalyzes two reactions: the carboxylation of D-ribulose 1,5-bisphosphate, the primary event in carbon dioxide fixation, as well as the oxidative fragmentation of the pentose substrate in the photorespiration process. Both reactions occur simultaneously and in competition at the same active site. In Kigelia africana (Sausage tree), this protein is Ribulose bisphosphate carboxylase large chain.